A 143-amino-acid chain; its full sequence is ATP synthase epsilon chain (143 aa).

The protein belongs to the ATPase epsilon chain family. F-type ATPases have 2 components, CF(1) - the catalytic core - and CF(0) - the membrane proton channel. CF(1) has five subunits: alpha(3), beta(3), gamma(1), delta(1), epsilon(1). CF(0) has three main subunits: a, b and c.

The protein resides in the cell membrane. Functionally, produces ATP from ADP in the presence of a proton gradient across the membrane. This chain is ATP synthase epsilon chain, found in Lacticaseibacillus casei (strain BL23) (Lactobacillus casei).